The primary structure comprises 154 residues: Putative peroxiredoxin MT1643 (154 aa).

Residues 1 to 153 (MKTGDTVADF…ALATLRAIRS (153 aa)) enclose the Thioredoxin domain. The active-site Cysteine sulfenic acid (-SOH) intermediate is Cys44. An intrachain disulfide couples Cys44 to Cys49.

Belongs to the peroxiredoxin family. BCP/PrxQ subfamily. As to quaternary structure, monomer.

It carries out the reaction a hydroperoxide + [thioredoxin]-dithiol = an alcohol + [thioredoxin]-disulfide + H2O. Thiol-specific peroxidase that catalyzes the reduction of hydrogen peroxide and organic hydroperoxides to water and alcohols, respectively. Plays a role in cell protection against oxidative stress by detoxifying peroxides and as sensor of hydrogen peroxide-mediated signaling events. This is Putative peroxiredoxin MT1643 (bcpB) from Mycobacterium tuberculosis (strain CDC 1551 / Oshkosh).